A 520-amino-acid chain; its full sequence is Macrophage receptor MARCO (520 aa).

Residues 1–43 lie on the Cytoplasmic side of the membrane; the sequence is MRNKKILKEDELLSETQQAAFHQIAMEPFEINVPKPKRRNGVN. The chain crosses the membrane as a helical; Signal-anchor for type II membrane protein span at residues 44 to 64; sequence FSLAVVVIYLILLTAGAGLLV. At 65 to 520 the chain is on the extracellular side; it reads VQVLNLQARL…EEDAGVECSV (456 aa). N-linked (GlcNAc...) asparagine glycosylation is found at N83 and N136. The tract at residues 142–423 is disordered; sequence GMFRIKGEQG…KGERGENSVS (282 aa). The region spanning 147–419 is the Collagen-like domain; it reads KGEQGAPGLQ…VKGEKGERGE (273 aa). Composition is skewed to low complexity over residues 203–227, 290–345, and 380–398; these read EAGL…PQGE, LAGF…PGAT, and SPGL…QKGD. Positions 410-419 are enriched in basic and acidic residues; it reads VKGEKGERGE. The region spanning 424–519 is the SRCR domain; the sequence is VRIVGSSNRG…HEEDAGVECS (96 aa). Disulfide bonds link C447/C508, C460/C518, and C488/C498.

As to quaternary structure, homotrimer; disulfide-linked. Trimers may assemble in larger oligomers thus resulting in the creation of a large surface capable of interacting with very large ligands. N-glycosylated. In terms of tissue distribution, expressed in alveolar macrophages (at protein level). Detected in macrophages from various tissues including thymus, kidney, Kupffer cells of liver, and spleen.

It is found in the cell membrane. Functionally, pattern recognition receptor (PRR) which binds Gram-positive and Gram-negative bacteria. Also plays a role in binding of unopsonized particles by alveolar macrophages. Binds to the secretoglobin SCGB3A2. In Homo sapiens (Human), this protein is Macrophage receptor MARCO (MARCO).